We begin with the raw amino-acid sequence, 483 residues long: Nucleolar protein 4 (483 aa).

Disordered regions lie at residues 210-418 and 435-483; these read QQDE…PIPS and SESR…DPQI. Positions 211–225 are enriched in acidic residues; that stretch reads QDEDESSIESDEFDM. Composition is skewed to polar residues over residues 229–254, 262–271, and 302–317; these read TRMS…TVHG, AESSNGNETL, and QPLN…QLTS. Composition is skewed to basic and acidic residues over residues 319–330 and 340–350; these read FRIDDQGSDGKN and LKMEREARENG. A compositionally biased stretch (polar residues) spans 351–363; the sequence is SKSPAHSYSSYDS. 3 stretches are compositionally biased toward basic and acidic residues: residues 364–374, 391–409, and 435–451; these read GKNESVDRGAE, HEDS…ERLK, and SESR…KAQD. A compositionally biased stretch (polar residues) spans 467-483; that stretch reads ATYSTATVPGSQEDPQI.

It is found in the nucleus. Its subcellular location is the nucleolus. The polypeptide is Nucleolar protein 4 (Nol4) (Mus musculus (Mouse)).